Here is a 373-residue protein sequence, read N- to C-terminus: Putative gustatory receptor 10b (373 aa).

Residues 1-8 lie on the Cytoplasmic side of the membrane; the sequence is MRVGKLCR. A helical transmembrane segment spans residues 9–29; the sequence is LALRFWMGLILVLGFSSHYYN. Residues 30-82 lie on the Extracellular side of the membrane; sequence PTRRRLVYSRILQTYDWLLMVINLGAFYLYYRYAMTYFLEGMFRRQGFVNQVS. A helical transmembrane segment spans residues 83-103; the sequence is TCNVFQQLLMAVTGTWLHFLF. Topologically, residues 104 to 132 are cytoplasmic; sequence ERHVCQTYNELSRILKHDLKLKEHSRFYC. A helical membrane pass occupies residues 133–153; the sequence is LAFLAKVYNFFHNFNFALSAI. Residues 154–170 lie on the Extracellular side of the membrane; that stretch reads MHWGLRPFNVWDLLANL. A helical transmembrane segment spans residues 171–191; the sequence is YFVYNSLARDAILVAYVLLLL. Residues 192–230 are Cytoplasmic-facing; sequence NLSEALRLNGQQEHDTYSDLMKQLRRRERLLRIGRRVHR. Residues 231 to 251 traverse the membrane as a helical segment; sequence MFAWLVAIALIYLVFFNTATI. Over 252–273 the chain is Extracellular; that stretch reads YLGYTMFIQKHDALGLRGRGLK. A helical membrane pass occupies residues 274–294; sequence MLLTVVSFLVILWDVVLLQVI. Topologically, residues 295-350 are cytoplasmic; it reads CEKLLAEENKICDCPEDVASSRTTYRQWEMSALRRAITRSSPENNVLGMFRMDMRC. A helical transmembrane segment spans residues 351-371; sequence AFALISCSLSYGIIIIQIGYI. Over 372-373 the chain is Extracellular; sequence PG.

Belongs to the insect chemoreceptor superfamily. Gustatory receptor (GR) family. Gr10a subfamily.

It localises to the cell membrane. In terms of biological role, probable gustatory receptor which mediates acceptance or avoidance behavior, depending on its substrates. This Drosophila melanogaster (Fruit fly) protein is Putative gustatory receptor 10b (Gr10b).